Consider the following 346-residue polypeptide: Uroporphyrinogen decarboxylase (346 aa).

Substrate contacts are provided by residues 23-27 (RQAGR), D72, Y155, S209, and H322.

Belongs to the uroporphyrinogen decarboxylase family. In terms of assembly, homodimer.

The protein localises to the cytoplasm. The catalysed reaction is uroporphyrinogen III + 4 H(+) = coproporphyrinogen III + 4 CO2. It participates in porphyrin-containing compound metabolism; protoporphyrin-IX biosynthesis; coproporphyrinogen-III from 5-aminolevulinate: step 4/4. Catalyzes the decarboxylation of four acetate groups of uroporphyrinogen-III to yield coproporphyrinogen-III. This is Uroporphyrinogen decarboxylase from Anaeromyxobacter dehalogenans (strain 2CP-C).